Here is a 415-residue protein sequence, read N- to C-terminus: Serine hydroxymethyltransferase (415 aa).

(6S)-5,6,7,8-tetrahydrofolate is bound by residues Leu117 and 121–123 (GHL). Lys226 is modified (N6-(pyridoxal phosphate)lysine). Glu241 provides a ligand contact to (6S)-5,6,7,8-tetrahydrofolate.

The protein belongs to the SHMT family. Homodimer. Pyridoxal 5'-phosphate is required as a cofactor.

The protein localises to the cytoplasm. The catalysed reaction is (6R)-5,10-methylene-5,6,7,8-tetrahydrofolate + glycine + H2O = (6S)-5,6,7,8-tetrahydrofolate + L-serine. Its pathway is one-carbon metabolism; tetrahydrofolate interconversion. It functions in the pathway amino-acid biosynthesis; glycine biosynthesis; glycine from L-serine: step 1/1. Functionally, catalyzes the reversible interconversion of serine and glycine with tetrahydrofolate (THF) serving as the one-carbon carrier. This reaction serves as the major source of one-carbon groups required for the biosynthesis of purines, thymidylate, methionine, and other important biomolecules. Also exhibits THF-independent aldolase activity toward beta-hydroxyamino acids, producing glycine and aldehydes, via a retro-aldol mechanism. The polypeptide is Serine hydroxymethyltransferase (Bacillus velezensis (strain DSM 23117 / BGSC 10A6 / LMG 26770 / FZB42) (Bacillus amyloliquefaciens subsp. plantarum)).